The chain runs to 224 residues: Large ribosomal subunit protein uL3 (224 aa).

Q159 carries the N5-methylglutamine modification.

It belongs to the universal ribosomal protein uL3 family. In terms of assembly, part of the 50S ribosomal subunit. Forms a cluster with proteins L14 and L19. In terms of processing, methylated by PrmB.

Functionally, one of the primary rRNA binding proteins, it binds directly near the 3'-end of the 23S rRNA, where it nucleates assembly of the 50S subunit. The polypeptide is Large ribosomal subunit protein uL3 (Janthinobacterium sp. (strain Marseille) (Minibacterium massiliensis)).